Consider the following 472-residue polypeptide: Serine/threonine-protein kinase sax-1 (472 aa).

One can recognise a Protein kinase domain in the interval 87–381; that stretch reads FESLKVIGRG…LDEIKQCPFF (295 aa). ATP contacts are provided by residues 93-101 and lysine 116; that span reads IGRGAFGEV. Aspartate 210 functions as the Proton acceptor in the catalytic mechanism. One can recognise an AGC-kinase C-terminal domain in the interval 382–452; that stretch reads RRIDWNHIRE…KRFDGLTQKM (71 aa).

This sequence belongs to the protein kinase superfamily. AGC Ser/Thr protein kinase family. Mg(2+) serves as cofactor.

The protein resides in the cytoplasm. Its subcellular location is the nucleus. It catalyses the reaction L-seryl-[protein] + ATP = O-phospho-L-seryl-[protein] + ADP + H(+). The enzyme catalyses L-threonyl-[protein] + ATP = O-phospho-L-threonyl-[protein] + ADP + H(+). In terms of biological role, acts with sax-2 to restrict the growth of both primary and secondary neurites. Regulates mechanosensory tiling by controlling the termination point of sensory dendrites. The polypeptide is Serine/threonine-protein kinase sax-1 (Caenorhabditis briggsae).